The primary structure comprises 1240 residues: Phospholipid-transporting ATPase 6 (1240 aa).

Topologically, residues 1–75 (MARRRIRSRI…TTRYNLLTFL (75 aa)) are cytoplasmic. Residues 76-97 (PKCLYEQFHRVANFYFLVAAIL) traverse the membrane as a helical segment. Over 98-101 (SVFP) the chain is Extracellular. A helical transmembrane segment spans residues 102–124 (LSPFNKWSMIAPLVFVVGLSMGK). Residues 125–306 (EALEDWRRFM…SRIEKRMDYI (182 aa)) are Cytoplasmic-facing. The helical transmembrane segment at 307 to 328 (IYTLFALLLTVSFISSLGFAVM) threads the bilayer. Residues 329 to 360 (TKLLMAEWWYLRPDKPESLTNPTNPLYAWVVH) are Extracellular-facing. The helical transmembrane segment at 361–378 (LITALLLYGYLIPISLYV) threads the bilayer. Over 379-943 (SIEVVKVLQA…HGHWCYKRIA (565 aa)) the chain is Cytoplasmic. The 4-aspartylphosphate intermediate role is filled by Asp426. Lys625 participates in a covalent cross-link: Glycyl lysine isopeptide (Lys-Gly) (interchain with G-Cter in ubiquitin). Residues Asp888 and Asp892 each contribute to the Mg(2+) site. The helical transmembrane segment at 944–963 (QMICYFFYKNITFGLTLFYF) threads the bilayer. The Extracellular portion of the chain corresponds to 964-977 (ECFTGFSGQSIYND). Residues 978–997 (SYLLLFNVVLTSLPVISLGV) traverse the membrane as a helical segment. Residues 998–1027 (FEQDVPSDVCLQFPALYQQGPKNLFFDWYR) lie on the Cytoplasmic side of the membrane. A helical transmembrane segment spans residues 1028–1050 (ILGWMGNGVYASIVIFTLNLGIF). At 1051–1063 (HVQSFRSDGQTAD) the chain is on the extracellular side. Residues 1064–1086 (MNAMGTAMFTCIIWAVNVQIALT) traverse the membrane as a helical segment. Topologically, residues 1087 to 1092 (MSHFTW) are cytoplasmic. A helical membrane pass occupies residues 1093 to 1113 (IQHVMIWGSIGAWYVFLALYG). Topologically, residues 1114–1130 (MLPVKLSGNIFHMLVEI) are extracellular. The helical transmembrane segment at 1131 to 1155 (LAPAPIFWLTSLLVIAATTLPYLFH) threads the bilayer. Over 1156 to 1240 (ISYQRSVNPL…SNDTPSSNSQ (85 aa)) the chain is Cytoplasmic.

Belongs to the cation transport ATPase (P-type) (TC 3.A.3) family. Type IV subfamily.

It is found in the cell membrane. It localises to the endomembrane system. The enzyme catalyses ATP + H2O + phospholipidSide 1 = ADP + phosphate + phospholipidSide 2.. In terms of biological role, involved in transport of phospholipids and in regulation of pollen plasma membrane lipid asymmetry. The chain is Phospholipid-transporting ATPase 6 from Arabidopsis thaliana (Mouse-ear cress).